Reading from the N-terminus, the 504-residue chain is UDP-N-acetylmuramoylalanine--D-glutamate ligase (504 aa).

Residue 129-135 (GTNGKTT) participates in ATP binding.

This sequence belongs to the MurCDEF family.

It is found in the cytoplasm. The enzyme catalyses UDP-N-acetyl-alpha-D-muramoyl-L-alanine + D-glutamate + ATP = UDP-N-acetyl-alpha-D-muramoyl-L-alanyl-D-glutamate + ADP + phosphate + H(+). The protein operates within cell wall biogenesis; peptidoglycan biosynthesis. In terms of biological role, cell wall formation. Catalyzes the addition of glutamate to the nucleotide precursor UDP-N-acetylmuramoyl-L-alanine (UMA). This is UDP-N-acetylmuramoylalanine--D-glutamate ligase from Burkholderia mallei (strain NCTC 10247).